The following is a 503-amino-acid chain: Transcription termination/antitermination protein NusA (503 aa).

Residues 140–206 (GELVIGVVKR…RGPQLLVSRT (67 aa)) form the S1 motif domain. The KH domain occupies 308–374 (SHTMDIAVNK…FMEKLDVDEE (67 aa)).

This sequence belongs to the NusA family. In terms of assembly, monomer. Binds directly to the core enzyme of the DNA-dependent RNA polymerase and to nascent RNA.

The protein resides in the cytoplasm. Its function is as follows. Participates in both transcription termination and antitermination. The polypeptide is Transcription termination/antitermination protein NusA (Coxiella burnetii (strain RSA 493 / Nine Mile phase I)).